The chain runs to 153 residues: Catabolic 3-dehydroquinase (153 aa).

The Proton acceptor role is filled by Tyr-24. 3 residues coordinate substrate: Asn-75, His-81, and Asp-88. The active-site Proton donor is His-101. Substrate is bound by residues 102 to 103 (VS) and Arg-112.

This sequence belongs to the type-II 3-dehydroquinase family. As to quaternary structure, homododecamer. Adopts a ring-like structure, composed of an arrangement of two hexameric rings stacked on top of one another.

The catalysed reaction is 3-dehydroquinate = 3-dehydroshikimate + H2O. The protein operates within aromatic compound metabolism; 3,4-dihydroxybenzoate biosynthesis; 3,4-dihydroxybenzoate from 3-dehydroquinate: step 1/2. In terms of biological role, is involved in the catabolism of quinate. Allows the utilization of quinate as carbon source via the beta-ketoadipate pathway. This is Catabolic 3-dehydroquinase from Emericella nidulans (strain FGSC A4 / ATCC 38163 / CBS 112.46 / NRRL 194 / M139) (Aspergillus nidulans).